The primary structure comprises 322 residues: Chemokine XC receptor 1 (322 aa).

At 1–27 (MESSTAFYDYHDKLSLLCENNVIFFST) the chain is on the extracellular side. Residues 28 to 55 (ISTIVLYSLVFLLSLVGNSLVLWVLVKY) traverse the membrane as a helical segment. The Cytoplasmic portion of the chain corresponds to 56 to 65 (ENLESLTNIF). A helical membrane pass occupies residues 66–85 (ILNLCLSDLMFSCLLPVLIS). Residues 86-98 (AQWSWFLGDFFCK) are Extracellular-facing. A disulfide bridge links Cys97 with Cys170. The chain crosses the membrane as a helical span at residues 99 to 120 (FFNMIFGISLYSSIFFLTIMTI). At 121–137 (HRYLSVVSPISTLGIHT) the chain is on the cytoplasmic side. A helical transmembrane segment spans residues 138-162 (LRCRVLVTSCVWAASILFSIPDAVF). Residues 163–185 (HKVISLNCKYSEHHGFLASVYQH) are Extracellular-facing. Residues 186–204 (NIFFLLSMGIILFCYVQIL) traverse the membrane as a helical segment. The Cytoplasmic segment spans residues 205–220 (RTLFRTRSRQRHRTVR). Residues 221–243 (LIFTVVVAYFLSWAPYNLTLFLK) traverse the membrane as a helical segment. The Extracellular portion of the chain corresponds to 244-259 (TGIIQQSCESLQQLDI). A helical membrane pass occupies residues 260 to 283 (AMIICRHLAFSHCCFNPVLYVFVG). Topologically, residues 284-322 (IKFRRHLKHLFQQVWLCRKTSSTVPCSPGTFTYEGPSFY) are cytoplasmic.

Belongs to the G-protein coupled receptor 1 family. In terms of tissue distribution, expressed by dendritic cells from the thymus, slpeen, subcutaneous lymph nodes and mesenteric lymph nodes.

The protein resides in the cell membrane. In terms of biological role, receptor for chemokines SCYC1 and SCYC2. Subsequently transduces a signal by increasing the intracellular calcium ions level. Receptor for XCL1/Lymphotactin. This is Chemokine XC receptor 1 (Xcr1) from Mus musculus (Mouse).